The chain runs to 658 residues: Alkyldihydroxyacetonephosphate synthase, peroxisomal (658 aa).

Positions 1–24 (MAEAAAAAAAAAAAGETSASSGSA) are enriched in low complexity. The interval 1–37 (MAEAAAAAAAAAAAGETSASSGSAAERDPDQDRAGRR) is disordered. The N-terminal 58 residues, 1–58 (MAEAAAAAAAAAAAGETSASSGSAAERDPDQDRAGRRLRVLSGHLLGRPQEALSTNEC), are a transit peptide targeting the peroxisome. The segment covering 25–35 (AERDPDQDRAG) has biased composition (basic and acidic residues). S65 carries the post-translational modification Phosphoserine. Phosphothreonine is present on T74. K102 carries the N6-acetyllysine modification. One can recognise an FAD-binding PCMH-type domain in the interval 202–384 (FERIPDIVLW…TEATIKIRPT (183 aa)). FAD contacts are provided by residues 234-240 (PIGGGTS), 303-309 (DSLEFST), and 316-319 (TRAS). K347 carries the post-translational modification N6-acetyllysine. 368–374 (EGTLGVI) contacts FAD. Position 515 (R515) interacts with substrate. Y578 acts as the Proton donor/acceptor in catalysis. Important for enzyme activity regions lie at residues 615-617 (HHH) and 654-658 (NRNLL).

This sequence belongs to the FAD-binding oxidoreductase/transferase type 4 family. As to quaternary structure, homodimer. The cofactor is FAD.

It localises to the peroxisome membrane. It is found in the peroxisome. The enzyme catalyses a long chain fatty alcohol + a 1-acylglycerone 3-phosphate = a 1-O-alkylglycerone 3-phosphate + a long-chain fatty acid + H(+). The catalysed reaction is hexadecan-1-ol + 1-hexadecanoylglycerone 3-phosphate = 1-O-hexadecylglycerone 3-phosphate + hexadecanoate + H(+). It carries out the reaction 1-hexadecanoylglycerone 3-phosphate + a long-chain fatty acid = a 1-acylglycerone 3-phosphate + hexadecanoate. Its pathway is glycerolipid metabolism; ether lipid biosynthesis. Its activity is regulated as follows. Inhibited by N-ethylmaleimide, p-bromophenacylbromide, 2,4- dinitrofluorobenzene and divalent cations such as such as Mn(2+), Mg(2+) and Zn(2+). Inhibition by p-bromophenacylbromide is strongly pH dependent and is highest at alkaline conditions. Catalyzes the exchange of the acyl chain in acyl-dihydroxyacetonephosphate (acyl-DHAP) for a long chain fatty alcohol, yielding the first ether linked intermediate, i.e. alkyl-dihydroxyacetonephosphate (alkyl-DHAP), in the pathway of ether lipid biosynthesis. This Cavia porcellus (Guinea pig) protein is Alkyldihydroxyacetonephosphate synthase, peroxisomal (AGPS).